Reading from the N-terminus, the 435-residue chain is MNANLNKAYPNVSLENFFSTPLAATNDAVFAAIQAEYTRQNEQIELIASENIVSKAVMQAQGTCLTNKYAEGYPGRRYYGGCEHVDSVEQIAIERAKMLFQCQYANVQPHSGAQANGAVMLALLQPGDTIMGMSLDAGGHLTHGARPALSGKWFNAVQYGVDRQTLEINYDSVRALALEHKPKMIIAGGSAIPRTIDFAQFRSIVDEVGALLMVDMAHIAGLVATGAHPSPLPHAHVVTTTTHKTLRGPRGGMILTNSEEIHKKINSAVFPGLQGGPLMHVIAAKAVAFGEALGPEFRTYIDSVIDNAKVLAEVLQTRGCDIVTGGTDTHLMLVDLRPKGLKGNQVEQALERAGITCNKNGIPFDEEKPMITSGIRLGTPAGTSRGFGREEFKLIGEWIGDVLDGLVASPEGNPDVEQQVRKQVKALCQRFPLYQ.

Residues L135 and 139 to 141 (GHL) each bind (6S)-5,6,7,8-tetrahydrofolate. K244 bears the N6-(pyridoxal phosphate)lysine mark. Residue E260 participates in (6S)-5,6,7,8-tetrahydrofolate binding.

This sequence belongs to the SHMT family. In terms of assembly, homodimer. Requires pyridoxal 5'-phosphate as cofactor.

Its subcellular location is the cytoplasm. It carries out the reaction (6R)-5,10-methylene-5,6,7,8-tetrahydrofolate + glycine + H2O = (6S)-5,6,7,8-tetrahydrofolate + L-serine. The protein operates within one-carbon metabolism; tetrahydrofolate interconversion. It participates in amino-acid biosynthesis; glycine biosynthesis; glycine from L-serine: step 1/1. Its function is as follows. Catalyzes the reversible interconversion of serine and glycine with tetrahydrofolate (THF) serving as the one-carbon carrier. This reaction serves as the major source of one-carbon groups required for the biosynthesis of purines, thymidylate, methionine, and other important biomolecules. Also exhibits THF-independent aldolase activity toward beta-hydroxyamino acids, producing glycine and aldehydes, via a retro-aldol mechanism. The protein is Serine hydroxymethyltransferase 2 of Vibrio cholerae serotype O1 (strain ATCC 39315 / El Tor Inaba N16961).